The sequence spans 49 residues: Large ribosomal subunit protein bL33A (49 aa).

Belongs to the bacterial ribosomal protein bL33 family.

This chain is Large ribosomal subunit protein bL33A, found in Leuconostoc mesenteroides subsp. mesenteroides (strain ATCC 8293 / DSM 20343 / BCRC 11652 / CCM 1803 / JCM 6124 / NCDO 523 / NBRC 100496 / NCIMB 8023 / NCTC 12954 / NRRL B-1118 / 37Y).